We begin with the raw amino-acid sequence, 156 residues long: Transcription elongation factor GreA (156 aa).

Positions 45 to 66 (NAEYHSAKEKQSFIEGRIKELE) form a coiled coil.

It belongs to the GreA/GreB family.

Its function is as follows. Necessary for efficient RNA polymerase transcription elongation past template-encoded arresting sites. The arresting sites in DNA have the property of trapping a certain fraction of elongating RNA polymerases that pass through, resulting in locked ternary complexes. Cleavage of the nascent transcript by cleavage factors such as GreA or GreB allows the resumption of elongation from the new 3'terminus. GreA releases sequences of 2 to 3 nucleotides. This chain is Transcription elongation factor GreA, found in Jannaschia sp. (strain CCS1).